The following is an 875-amino-acid chain: DNA topoisomerase 3-beta (875 aa).

Residues 3 to 153 (SVLMVAEKPS…QVTYRAHFSA (151 aa)) form the Toprim domain. In terms of domain architecture, Topo IA-type catalytic spans 170–589 (NENEAKSVDA…AIKIFKLKFM (420 aa)). Catalysis depends on Tyr-332, which acts as the O-(5'-phospho-DNA)-tyrosine intermediate. The disordered stretch occupies residues 371–391 (QTPRKGKDAGDHPPITPMKLG).

It belongs to the type IA topoisomerase family.

It carries out the reaction ATP-independent breakage of single-stranded DNA, followed by passage and rejoining.. Its function is as follows. Releases the supercoiling and torsional tension of DNA introduced during the DNA replication and transcription by transiently cleaving and rejoining one strand of the DNA duplex. Introduces a single-strand break via transesterification at a target site in duplex DNA. The scissile phosphodiester is attacked by the catalytic tyrosine of the enzyme, resulting in the formation of a DNA-(5'-phosphotyrosyl)-enzyme intermediate and the expulsion of a 3'-OH DNA strand. The free DNA strand than undergoes passage around the unbroken strand thus removing DNA supercoils. Finally, in the religation step, the DNA 3'-OH attacks the covalent intermediate to expel the active-site tyrosine and restore the DNA phosphodiester backbone. Weakly relaxes negative supercoils and displays a distinct preference for binding single-stranded DNA. This is DNA topoisomerase 3-beta (Top3beta) from Drosophila melanogaster (Fruit fly).